A 327-amino-acid polypeptide reads, in one-letter code: Microtubule-associated protein RP/EB family member 2 (327 aa).

Polar residues predominate over residues 1-17 (MPGPTQTLSPNGENNND). The segment at 1–20 (MPGPTQTLSPNGENNNDVIH) is disordered. In terms of domain architecture, Calponin-homology (CH) spans 56 to 158 (TMSRHDIIAW…FIQWFKKFFD (103 aa)). 2 disordered regions span residues 170-238 (EARQ…DKDL) and 295-327 (LYSS…QEEY). The EB1 C-terminal domain maps to 234-304 (SDKDLETQVS…LYSSEEQESH (71 aa)).

Belongs to the MAPRE family.

The protein resides in the cytoplasm. The protein localises to the cytoskeleton. Its function is as follows. May be involved in microtubule polymerization, and spindle function by stabilizing microtubules and anchoring them at centrosomes. The polypeptide is Microtubule-associated protein RP/EB family member 2 (mapre2) (Xenopus laevis (African clawed frog)).